We begin with the raw amino-acid sequence, 3423 residues long: Genome polyprotein (3423 aa).

The segment at 1–25 is disordered; it reads MKNPKKKSGGFRIVNMLKRGVARVS. At 1–104 the chain is on the cytoplasmic side; the sequence is MKNPKKKSGG…INARKEKKRR (104 aa). A hydrophobic; homodimerization of capsid protein C region spans residues 37–72; it reads LLLGHGPIRMVLAILAFLRFTAIKPSLGLINRWGSV. A propeptide spans 105 to 122 (ER anchor for capsid protein C, removed in mature form by serine protease NS3); it reads GTDTSVGIVGLLLTTAMA. A helical membrane pass occupies residues 105–125; it reads GTDTSVGIVGLLLTTAMAVEV. Residues 126–249 are Extracellular-facing; it reads TRRGNAYYMY…YTKHLIRVEN (124 aa). Residue Asn-192 is glycosylated (N-linked (GlcNAc...) asparagine; by host). Residues 250-269 form a helical membrane-spanning segment; sequence WIFRNPGFALAAAAIAWLLG. Over 270–274 the chain is Cytoplasmic; that stretch reads SSTSQ. A helical membrane pass occupies residues 275–290; that stretch reads KVIYLVMILLIAPAYS. Topologically, residues 291–745 are extracellular; it reads IRCIGVSNRD…HQIFGAAFKS (455 aa). A Glycyl lysine isopeptide (Lys-Gly) (interchain with G-Cter in ubiquitin) cross-link involves residue Lys-328. 2 disulfide bridges follow: Cys-350–Cys-406 and Cys-382–Cys-411. Residues 388–401 form a fusion peptide region; the sequence is DRGWGNGCGLFGKG. Residue Asn-444 is glycosylated (N-linked (GlcNAc...) asparagine; by host). 2 disulfides stabilise this stretch: Cys-480/Cys-581 and Cys-598/Cys-629. Lys-571 participates in a covalent cross-link: Glycyl lysine isopeptide (Lys-Gly) (interchain with G-Cter in ubiquitin). A helical transmembrane segment spans residues 746–767; the sequence is LFGGMSWFSQILIGTLLVWLGL. Residues 768-773 lie on the Cytoplasmic side of the membrane; the sequence is NTKNGS. Residues 774-794 traverse the membrane as a helical segment; sequence ISLMCLALGGVLIFLSTAVSA. At 795 to 1177 the chain is on the lumenal side; sequence DVGCSVDFSK…EGLKKRMTTK (383 aa). 6 cysteine pairs are disulfide-bonded: Cys-798-Cys-809, Cys-849-Cys-937, Cys-973-Cys-1017, Cys-1074-Cys-1123, Cys-1085-Cys-1106, and Cys-1107-Cys-1110. Asn-924 and Asn-1001 each carry an N-linked (GlcNAc...) asparagine; by host glycan. The chain crosses the membrane as a helical span at residues 1178-1198; the sequence is IIISTSMAVLVAMILGGFSMS. Over 1199-1220 the chain is Cytoplasmic; that stretch reads DLAKLAILMGATFAEMNTGGDV. A helical membrane pass occupies residues 1221 to 1241; it reads AHLALIAAFKVRPALLVSFIF. Residues 1242 to 1270 lie on the Lumenal side of the membrane; that stretch reads RANWTPRESMLLALASCLLQTAISALEGD. Residues 1271–1291 form a helical membrane-spanning segment; that stretch reads LMVPINGFALAWLAIRAMVVP. The Cytoplasmic segment spans residues 1292–1295; the sequence is RTDN. Residues 1296–1316 form a helical membrane-spanning segment; the sequence is ITLAILAALTPLARGTLLVAW. Residues 1317–1345 are Lumenal-facing; it reads RAGLATCGGFMLLSLKGKGSVKKNLPFVM. The helical transmembrane segment at 1346-1366 threads the bilayer; the sequence is ALGLTAVRLVDPINVVGLLLL. At 1367-1373 the chain is on the cytoplasmic side; the sequence is TRSGKRS. The chain crosses the membrane as a helical span at residues 1374-1394; it reads WPPSEVLTAVGLICALAGGFA. The Lumenal portion of the chain corresponds to 1395–1397; the sequence is KAD. The chain crosses the membrane as a helical span at residues 1398 to 1418; sequence IEMAGPMAAVGLLIVSYVVSG. At 1419-1472 the chain is on the cytoplasmic side; that stretch reads KSVDMYIERAGDITWEKDAEVTGNSPRLDVALDESGDFSLVEDDGPPMREIILK. The interacts with and activates NS3 protease stretch occupies residues 1425-1464; it reads IERAGDITWEKDAEVTGNSPRLDVALDESGDFSLVEDDGP. The interval 1429-1451 is disordered; sequence GDITWEKDAEVTGNSPRLDVALD. The helical intramembrane region spans 1473-1493; it reads VVLMAICGMNPIAIPFAAGAW. Residues 1494-2170 lie on the Lumenal side of the membrane; sequence YVYVKTGKRS…KAAAAQLPET (677 aa). Positions 1503–1680 constitute a Peptidase S7 domain; the sequence is SGALWDVPAP…RREEETPVEC (178 aa). Catalysis depends on charge relay system; for serine protease NS3 activity residues His-1553, Asp-1577, and Ser-1637. A Helicase ATP-binding domain is found at 1683–1839; sequence PSMLKKKQLT…DSNSPIMDTE (157 aa). The interval 1687-1690 is important for RNA-binding; it reads KKKQ. Residue 1696–1703 participates in ATP binding; sequence LHPGAGKT. The DEAH box signature appears at 1787-1790; that stretch reads DEAH. In terms of domain architecture, Helicase C-terminal spans 1834 to 2013; sequence PIMDTEVEVP…GLIASLYRPE (180 aa). N6-acetyllysine; by host is present on Lys-1891. The helical transmembrane segment at 2171-2191 threads the bilayer; that stretch reads LETIMLLGLLGTVSLGIFFVL. Residues 2192-2195 lie on the Lumenal side of the membrane; that stretch reads MRNK. Residues 2196–2216 constitute an intramembrane region (helical); the sequence is GIGKMGFGMVTLGASAWLMWL. Over 2217 to 2218 the chain is Cytoplasmic; sequence SE. A helical membrane pass occupies residues 2219–2239; the sequence is IEPARIACVLIVVFLLLVVLI. Topologically, residues 2240 to 2254 are lumenal; sequence PEPEKQRSPQDNQMA. Positions 2255–2269 form an intramembrane region, helical; the sequence is IIIMVAVGLLGLITA. Residues 2270–2307 are Lumenal-facing; it reads NELGWLERTKSDLSHLMGRREEGATIGFSMDIDLRPAS. The segment at residues 2308-2328 is an intramembrane region (helical); it reads AWAIYAALTTFITPAVQHAVT. The Lumenal portion of the chain corresponds to 2329–2344; it reads TSYNNYSLMAMATQAG. Residues 2345-2365 traverse the membrane as a helical segment; sequence VLFGMGKGMPFYAWDFGVPLL. Topologically, residues 2366–2375 are cytoplasmic; sequence MIGCYSQLTP. The chain crosses the membrane as a helical span at residues 2376–2396; that stretch reads LTLIVAIILLVAHYMYLIPGL. At 2397–2441 the chain is on the lumenal side; the sequence is QAAAARAAQKRTAAGIMKNPVVDGIVVTDIDTMTIDPQVEKKMGQ. The chain crosses the membrane as a helical span at residues 2442-2462; it reads VLLIAVAVSSAILSRTAWGWG. Topologically, residues 2463–3423 are cytoplasmic; sequence EAGALITAAT…GEEGSTPGVL (961 aa). An mRNA cap 0-1 NS5-type MT domain is found at 2521–2785; it reads GGGTGETLGE…DVNLGSGTRA (265 aa). 2533-2539 contacts GTP; sequence KARLNQM. Ser-2576 is an S-adenosyl-L-methionine binding site. Ser-2576 bears the Phosphoserine mark. The active-site For 2'-O-MTase activity is Lys-2581. Residues 2597 to 2600 are SUMO-interacting motif (SIM); the sequence is VIDL. Positions 2606, 2607, 2624, 2625, 2630, 2631, 2651, 2652, 2666, and 2667 each coordinate S-adenosyl-L-methionine. The active-site For 2'-O-MTase activity is Asp-2666. 2669-2675 is a GTP binding site; the sequence is ESSSSPE. Lys-2702 functions as the For 2'-O-MTase activity in the catalytic mechanism. GTP is bound at residue 2733-2735; it reads RNS. Glu-2738 serves as the catalytic For 2'-O-MTase activity. Residue Tyr-2740 participates in S-adenosyl-L-methionine binding. Positions 2908-2914 match the Nuclear localization signal (NLS) motif; sequence KHKRPRV. Residues Glu-2959, His-2963, Cys-2968, and Cys-2971 each contribute to the Zn(2+) site. A RdRp catalytic domain is found at 3049–3199; that stretch reads GRMYADDTAG…KPIDDRFAHA (151 aa). Zn(2+)-binding residues include His-3234, Cys-3250, and Cys-3369.

This sequence in the N-terminal section; belongs to the class I-like SAM-binding methyltransferase superfamily. mRNA cap 0-1 NS5-type methyltransferase family. In terms of assembly, homodimer. Interacts with host SERTAD3; this interaction promotes capsid protein C degradation. Interacts with host CAPRIN1; this interaction is probably linked to the inhibition of stress granules formation by the virus. Interacts with host G3BP1; this interaction is probably linked to the inhibition of stress granules formation by the virus. Forms heterodimers with envelope protein E in the endoplasmic reticulum and Golgi. Interacts with non-structural protein 2A. As to quaternary structure, homodimer; in the endoplasmic reticulum and Golgi. Interacts with host TYRO3, AXL and DC-SIGN proteins. Interacts with non-structural protein 2A. Interacts with host HAVCR1; this interaction likely mediates virus attachment to host cell. Interacts with host NCAM1. Interacts with host HSPA5. Interacts with Aedes aegypti SRPN25, APY and venom allergen-1 salivary proteins; the interactions do not affect Zika virus replication in human endothelial cells and keratinocytes. In terms of assembly, homodimer; Homohexamer when secreted. Interacts with host TBK1. Interacts with host USP8. Interacts with envelope protein E. Interacts with the structural protein prM/E complex, and the NS2B/NS3 protease complex. As to quaternary structure, forms a heterodimer with serine protease NS3. May form homooligomers. Interacts with human SPCS1. Interacts with non-structural protein 2A. In terms of assembly, forms a heterodimer with NS2B. Interacts with NS4B. Interacts with unphosphorylated RNA-directed RNA polymerase NS5; this interaction stimulates RNA-directed RNA polymerase NS5 guanylyltransferase activity. Interacts with non-structural protein 2A. Interacts with host SHFL; this interaction promotes NS3 degradation via a lysosome-dependent pathway. Interacts with host CEP63; this interaction disorganizes the centrosome and inhibits host innate immune response. May interact with host ANKLE2; the interaction may cause defects in brain development, such as microcephaly. May interact with host SRPRA and SEC61G. As to quaternary structure, interacts with serine protease NS3. Interacts with NS1. In terms of assembly, homodimer. Interacts with host STAT2; this interaction inhibits the phosphorylation of the latter, and, when all viral proteins are present (polyprotein), targets STAT2 for degradation. Interacts with host TBK1 and IKBKE; these interactions lead to the inhibition of the host RIG-I signaling pathway. Interacts with host PAF1 complex; the interaction may prevent the recruitment of the host PAF1 complex to interferon-responsive genes, and thus reduces the immune response. Interacts with serine protease NS3. Interacts with host KPNA2. Interacts with host ZSWIM8; this interaction allows STAT2 binding to ZSWIM8 and subsequent proteasomal degradation leading to inhibition of interferon signaling. In terms of processing, specific enzymatic cleavages in vivo yield mature proteins. Cleavages in the lumen of endoplasmic reticulum are performed by host signal peptidase, whereas cleavages in the cytoplasmic side are performed by serine protease NS3. Signal cleavage at the 2K-4B site requires a prior NS3 protease-mediated cleavage at the 4A-2K site. Post-translationally, cleaved in post-Golgi vesicles by a host furin, releasing the mature small envelope protein M, and peptide pr. This cleavage is incomplete as up to 30% of viral particles still carry uncleaved prM. N-glycosylation plays a role in virulence in mammalian and mosquito hosts, but may have no effect on neurovirulence. In terms of processing, ubiquitination by host TRIM7 promotes virus attachment and fusion of the virus and the host endosome membrane. Post-translationally, N-glycosylated. The excreted form is glycosylated, which is required for efficient secretion of the protein from infected cells. Ubiquitination by host TRIM22 leads to proteasomal degradation. In terms of processing, acetylated by host KAT5. Acetylation modulates NS3 RNA-binding and unwinding activities and plays an important positive role for viral replication. Post-translationally, phosphorylated on serines residues. This phosphorylation may trigger NS5 nuclear localization. Sumoylated, required for regulating IFN induced interferon stimulated genes/ISGs.

It is found in the virion. The protein localises to the host nucleus. Its subcellular location is the host cytoplasm. It localises to the host perinuclear region. The protein resides in the secreted. It is found in the virion membrane. The protein localises to the host endoplasmic reticulum membrane. Its subcellular location is the host cell surface. The catalysed reaction is a 5'-end (5'-triphosphoguanosine)-ribonucleoside in mRNA + S-adenosyl-L-methionine = a 5'-end (N(7)-methyl 5'-triphosphoguanosine)-ribonucleoside in mRNA + S-adenosyl-L-homocysteine. It carries out the reaction a 5'-end (N(7)-methyl 5'-triphosphoguanosine)-ribonucleoside in mRNA + S-adenosyl-L-methionine = a 5'-end (N(7)-methyl 5'-triphosphoguanosine)-(2'-O-methyl-ribonucleoside) in mRNA + S-adenosyl-L-homocysteine + H(+). It catalyses the reaction RNA(n) + a ribonucleoside 5'-triphosphate = RNA(n+1) + diphosphate. The enzyme catalyses Selective hydrolysis of -Xaa-Xaa-|-Yaa- bonds in which each of the Xaa can be either Arg or Lys and Yaa can be either Ser or Ala.. The catalysed reaction is a ribonucleoside 5'-triphosphate + H2O = a ribonucleoside 5'-diphosphate + phosphate + H(+). It carries out the reaction ATP + H2O = ADP + phosphate + H(+). Functionally, plays a role in virus budding by binding to the cell membrane and gathering the viral RNA into a nucleocapsid that forms the core of the mature virus particle. During virus entry, may induce genome penetration into the host cytoplasm after hemifusion induced by the surface proteins. Can migrate to the cell nucleus where it modulates host functions. Inhibits the integrated stress response (ISR) in the infected cell. In terms of biological role, inhibits RNA silencing by interfering with host Dicer. Prevents premature fusion activity of envelope proteins in trans-Golgi by binding to envelope protein E at pH 6.0. After virion release in extracellular space, gets dissociated from E dimers. Its function is as follows. Plays a role in host immune defense modulation and protection of envelope protein E during virion synthesis. PrM-E cleavage is inefficient, many virions are only partially matured and immature prM-E proteins could play a role in immune evasion. Contributes to fetal microcephaly in humans. Acts as a chaperone for envelope protein E during intracellular virion assembly by masking and inactivating envelope protein E fusion peptide. prM is the only viral peptide matured by host furin in the trans-Golgi network probably to avoid catastrophic activation of the viral fusion activity in acidic Golgi compartment prior to virion release. Functionally, may play a role in virus budding. Exerts cytotoxic effects by activating a mitochondrial apoptotic pathway through M ectodomain. May display a viroporin activity. In terms of biological role, binds to host cell surface receptors and mediates fusion between viral and cellular membranes. Efficient virus attachment to cell is, at least in part, mediated by host HAVCR1 in a cell-type specific manner. In addition, host NCAM1 can also be used as entry receptor. Interaction with host HSPA5 plays an important role in the early stages of infection as well. Envelope protein is synthesized in the endoplasmic reticulum and forms a heterodimer with protein prM. The heterodimer plays a role in virion budding in the ER, and the newly formed immature particle is covered with 60 spikes composed of heterodimers between precursor prM and envelope protein E. The virion is transported to the Golgi apparatus where the low pH causes the dissociation of PrM-E heterodimers and formation of E homodimers. PrM-E cleavage is inefficient, many virions are only partially matured and immature prM-E proteins could play a role in immune evasion. Plays a role in the inhibition of host RLR-induced interferon-beta activation by targeting TANK-binding kinase 1/TBK1. In addition, recruits the host deubiquitinase USP8 to cleave 'Lys-11'-linked polyubiquitin chains from caspase-1/CASP1 thus inhibiting its proteasomal degradation. In turn, stabilized CASP1 promotes cleavage of cGAS, which inhibits its ability to recognize mitochondrial DNA release and initiate type I interferon signaling. Its function is as follows. Component of the viral RNA replication complex that recruits genomic RNA, the structural protein prM/E complex, and the NS2B/NS3 protease complex to the virion assembly site and orchestrates virus morphogenesis. Also antagonizes the host alpha/beta interferon antiviral response. May disrupt adherens junction formation and thereby impair proliferation of radial cells in the host cortex. Functionally, required cofactor for the serine protease function of NS3. In terms of biological role, displays three enzymatic activities: serine protease, NTPase and RNA helicase. NS3 serine protease, in association with NS2B, performs its autocleavage and cleaves the polyprotein at dibasic sites in the cytoplasm: C-prM, NS2A-NS2B, NS2B-NS3, NS3-NS4A, NS4A-2K and NS4B-NS5. NS3 RNA helicase binds RNA and unwinds dsRNA in the 3' to 5' direction. Leads to translation arrest when expressed ex vivo. Disrupts host centrosome organization in a CEP63-dependent manner to degrade host TBK1 and inhibits innate immune response. Inhibits the integrated stress response (ISR) in the infected cell. Regulates the ATPase activity of the NS3 helicase activity. NS4A allows NS3 helicase to conserve energy during unwinding. Cooperatively with NS4B suppresses the Akt-mTOR pathway and leads to cellular dysregulation. By inhibiting host ANKLE2 functions, may cause defects in brain development, such as microcephaly. Also antagonizes the host MDA5-mediated induction of alpha/beta interferon antiviral response. Leads to translation arrest when expressed ex vivo. Inhibits the integrated stress response (ISR) in the infected cell. Its function is as follows. Functions as a signal peptide for NS4B and is required for the interferon antagonism activity of the latter. Functionally, induces the formation of ER-derived membrane vesicles where the viral replication takes place. Also plays a role in the inhibition of host RLR-induced interferon-beta production at TANK-binding kinase 1/TBK1 level. Cooperatively with NS4A suppresses the Akt-mTOR pathway and leads to cellular dysregulation. In terms of biological role, replicates the viral (+) and (-) RNA genome, and performs the capping of genomes in the cytoplasm. Methylates viral RNA cap at guanine N-7 and ribose 2'-O positions. Once sufficient NS5 is expressed, binds to the cap-proximal structure and inhibits further translation of the viral genome. Besides its role in RNA genome replication, also prevents the establishment of a cellular antiviral state by blocking the interferon-alpha/beta (IFN-alpha/beta) signaling pathway. Mechanistically, interferes with host kinases TBK1 and IKKE upstream of interferon regulatory factor 3/IRF3 to inhibit the RIG-I pathway. Also antagonizes type I interferon signaling by targeting STAT2 for degradation by the proteasome thereby preventing activation of JAK-STAT signaling pathway. Mechanistically, acts as a scaffold protein to connect host ZSWIM8/CUL3 ligase complex and STAT2, leading to STAT2 degradation. Within the host nucleus, disrupts host SUMO1 and STAT2 co-localization with PML, resulting in PML degradation. May also reduce immune responses by preventing the recruitment of the host PAF1 complex to interferon-responsive genes. The chain is Genome polyprotein from Zika virus (isolate ZIKV/Human/Cambodia/FSS13025/2010) (ZIKV).